Reading from the N-terminus, the 262-residue chain is Adenosylcobinamide-GDP ribazoletransferase (262 aa).

5 helical membrane-spanning segments follow: residues 41-63 (AFPFAGLAIALPSAAVAMALMAL), 68-85 (LFAAFVVVAIQALVTGAL), 115-134 (IGTYAAVALILSFGLRVSAF), 141-163 (FSPLGAAMAILGAACLSRAAMVW), and 201-221 (LLFYLAQVPALGVIAALVAFL).

The protein belongs to the CobS family. Associated with a large complex of proteins. Mg(2+) serves as cofactor.

It localises to the cell inner membrane. The catalysed reaction is alpha-ribazole + adenosylcob(III)inamide-GDP = adenosylcob(III)alamin + GMP + H(+). It catalyses the reaction alpha-ribazole 5'-phosphate + adenosylcob(III)inamide-GDP = adenosylcob(III)alamin 5'-phosphate + GMP + H(+). Its pathway is cofactor biosynthesis; adenosylcobalamin biosynthesis; adenosylcobalamin from cob(II)yrinate a,c-diamide: step 7/7. In terms of biological role, joins adenosylcobinamide-GDP and alpha-ribazole to generate adenosylcobalamin (Ado-cobalamin). Also synthesizes adenosylcobalamin 5'-phosphate from adenosylcobinamide-GDP and alpha-ribazole 5'-phosphate. The polypeptide is Adenosylcobinamide-GDP ribazoletransferase (cobV) (Sinorhizobium sp).